The chain runs to 174 residues: Small ribosomal subunit protein uS4 (174 aa).

Residues 105 to 169 (RRLQTVAYRK…SPLADDLHPE (65 aa)) enclose the S4 RNA-binding domain.

This sequence belongs to the universal ribosomal protein uS4 family. Part of the 30S ribosomal subunit. Contacts protein S5. The interaction surface between S4 and S5 is involved in control of translational fidelity.

In terms of biological role, one of the primary rRNA binding proteins, it binds directly to 16S rRNA where it nucleates assembly of the body of the 30S subunit. Functionally, with S5 and S12 plays an important role in translational accuracy. The polypeptide is Small ribosomal subunit protein uS4 (Natronomonas pharaonis (strain ATCC 35678 / DSM 2160 / CIP 103997 / JCM 8858 / NBRC 14720 / NCIMB 2260 / Gabara) (Halobacterium pharaonis)).